The primary structure comprises 466 residues: MGQKNHFDVIVIGSGPGGEGAAMGLTKGGKNVAIIEKESSVGGGCTHWGTIPSKALRHAVSRIIEFNSNPLFCKNNSSIHATFSTILSHAKSVIDKQTRLRQGFYDRNQCTLIFGAAHFIDAHTVAVKKADGSIDTYSADKFVIATGSRPYHPKDVDFGHPRIYDSDSILNLEHDPRHIIIYGAGVIGCEYASIFRGLDVKTDLINTRDRLLSFLDNEVSDALSYHFWNSGVVIRNDETYDKVEGTSDGVIVHLKSGKKMRADCLLYANGRTGNTDKLNLESVGLQADSRGQLVVNANYQTQVEHIYAVGDVIGYPSLASAAYDQGRFVAQAIIHGQAAHLLTEDIPTGIYTIPEISSVGRTEQELTAAKVPYEVGRASFKHLARAQIAGKDIGSLKILFHRETKEILGIHCFGERAAEIIHIGQAIMEQKGEANTIEYFVNTTFNYPTMAEAFRVAALNGLNRLF.

Residue 36-45 (EKESSVGGGC) participates in FAD binding.

Belongs to the class-I pyridine nucleotide-disulfide oxidoreductase family. The cofactor is FAD.

It localises to the cytoplasm. It catalyses the reaction NAD(+) + NADPH = NADH + NADP(+). In terms of biological role, conversion of NADPH, generated by peripheral catabolic pathways, to NADH, which can enter the respiratory chain for energy generation. The protein is Soluble pyridine nucleotide transhydrogenase of Vibrio cholerae serotype O1 (strain ATCC 39541 / Classical Ogawa 395 / O395).